The sequence spans 179 residues: Gamma-crystallin S (179 aa).

Ser-2 bears the N-acetylserine mark. The segment at 2–5 (SKTG) is N-terminal arm. 2 consecutive Beta/gamma crystallin 'Greek key' domains span residues 6–44 (TKITFYEDKNFQGRRYDCDCDCSDFHTYLSRCNSIRVEG) and 45–87 (GTWA…RALH). The tract at residues 88–93 (LSSGGQ) is connecting peptide. 2 Beta/gamma crystallin 'Greek key' domains span residues 94–134 (YKIQ…KVLD) and 135–177 (GAWI…RRIV).

Belongs to the beta/gamma-crystallin family. In terms of assembly, monomer.

Functionally, crystallins are the dominant structural components of the vertebrate eye lens. This is Gamma-crystallin S (CRYGS) from Oryctolagus cuniculus (Rabbit).